The chain runs to 156 residues: Small ribosomal subunit protein uS7 (156 aa).

Belongs to the universal ribosomal protein uS7 family. Part of the 30S ribosomal subunit. Contacts proteins S9 and S11.

Its function is as follows. One of the primary rRNA binding proteins, it binds directly to 16S rRNA where it nucleates assembly of the head domain of the 30S subunit. Is located at the subunit interface close to the decoding center, probably blocks exit of the E-site tRNA. This chain is Small ribosomal subunit protein uS7, found in Mycolicibacterium vanbaalenii (strain DSM 7251 / JCM 13017 / BCRC 16820 / KCTC 9966 / NRRL B-24157 / PYR-1) (Mycobacterium vanbaalenii).